A 234-amino-acid polypeptide reads, in one-letter code: Glucosamine-6-phosphate deaminase (234 aa).

Asp62 (proton acceptor; for enolization step) is an active-site residue. Asn128 (for ring-opening step) is an active-site residue. The active-site Proton acceptor; for ring-opening step is His130. Glu135 acts as the For ring-opening step in catalysis.

The protein belongs to the glucosamine/galactosamine-6-phosphate isomerase family. NagB subfamily.

It catalyses the reaction alpha-D-glucosamine 6-phosphate + H2O = beta-D-fructose 6-phosphate + NH4(+). It participates in amino-sugar metabolism; N-acetylneuraminate degradation; D-fructose 6-phosphate from N-acetylneuraminate: step 5/5. Catalyzes the reversible isomerization-deamination of glucosamine 6-phosphate (GlcN6P) to form fructose 6-phosphate (Fru6P) and ammonium ion. The protein is Glucosamine-6-phosphate deaminase of Streptococcus suis (strain 98HAH33).